The following is a 602-amino-acid chain: UvrABC system protein C (602 aa).

The GIY-YIG domain occupies 15-100; sequence DQSGVYHYFD…IKQLKPKYNI (86 aa). The UVR domain occupies 206 to 241; sequence SKLISRLKERMEKLAENLRFEEAGELRDRIEKIKRI.

This sequence belongs to the UvrC family. In terms of assembly, interacts with UvrB in an incision complex.

Its subcellular location is the cytoplasm. In terms of biological role, the UvrABC repair system catalyzes the recognition and processing of DNA lesions. UvrC both incises the 5' and 3' sides of the lesion. The N-terminal half is responsible for the 3' incision and the C-terminal half is responsible for the 5' incision. The polypeptide is UvrABC system protein C (Wolinella succinogenes (strain ATCC 29543 / DSM 1740 / CCUG 13145 / JCM 31913 / LMG 7466 / NCTC 11488 / FDC 602W) (Vibrio succinogenes)).